The primary structure comprises 159 residues: Transcription elongation factor GreA (159 aa).

A coiled-coil region spans residues 2–77; that stretch reads EENKEFLLTQ…LENMVRKAVI (76 aa).

It belongs to the GreA/GreB family.

In terms of biological role, necessary for efficient RNA polymerase transcription elongation past template-encoded arresting sites. The arresting sites in DNA have the property of trapping a certain fraction of elongating RNA polymerases that pass through, resulting in locked ternary complexes. Cleavage of the nascent transcript by cleavage factors such as GreA or GreB allows the resumption of elongation from the new 3'terminus. GreA releases sequences of 2 to 3 nucleotides. The protein is Transcription elongation factor GreA of Clostridioides difficile (strain 630) (Peptoclostridium difficile).